We begin with the raw amino-acid sequence, 582 residues long: Formate--tetrahydrofolate ligase (582 aa).

ATP is bound at residue 65–72 (TPLGEGKT).

This sequence belongs to the formate--tetrahydrofolate ligase family.

The catalysed reaction is (6S)-5,6,7,8-tetrahydrofolate + formate + ATP = (6R)-10-formyltetrahydrofolate + ADP + phosphate. It functions in the pathway one-carbon metabolism; tetrahydrofolate interconversion. This is Formate--tetrahydrofolate ligase from Vibrio cholerae serotype O1 (strain ATCC 39315 / El Tor Inaba N16961).